Reading from the N-terminus, the 238-residue chain is Probable transcriptional regulatory protein VIBHAR_07036 (238 aa).

It belongs to the TACO1 family.

It is found in the cytoplasm. In Vibrio campbellii (strain ATCC BAA-1116), this protein is Probable transcriptional regulatory protein VIBHAR_07036.